The sequence spans 736 residues: Prolyl oligopeptidase dbiP (736 aa).

Residues Ser572, Asp656, and His692 each act as charge relay system in the active site.

This sequence belongs to the peptidase S9A family. In terms of assembly, monomer.

The catalysed reaction is Hydrolysis of Pro-|-Xaa &gt;&gt; Ala-|-Xaa in oligopeptides.. It functions in the pathway mycotoxin biosynthesis. Its function is as follows. Prolyl oligopeptidase; part of the gene cluster that mediates the biosynthesis of dendrothelin A, a highly methylated cyclic dodecapeptide showing slight nematodicidal activity. Excises and catalyzes the macrocyclization of the methylated core peptide of dbiMA to yield dendrothelin A. DbiP works in a two-step fashion with an initial cleavage at the N-terminus, followed by a second cleavage at the C-terminus of the core peptide. According to this mechanism, the free N-terminus of the core peptide, generated by the first cleavage, attacks the covalent intermediate of the second cleavage, which results in macrocyclization of the core peptide. The chain is Prolyl oligopeptidase dbiP from Dendrothele bispora (strain CBS 962.96).